The sequence spans 358 residues: Gibberellin 2-beta-dioxygenase 6 (358 aa).

Positions 207–308 (DETTCFLRLN…RLSVAYFLCP (102 aa)) constitute a Fe2OG dioxygenase domain. Tyrosine 218 is a binding site for 2-oxoglutarate. Fe cation is bound by residues histidine 233, aspartate 235, and histidine 289. 2-oxoglutarate is bound by residues arginine 299 and serine 301.

The protein belongs to the iron/ascorbate-dependent oxidoreductase family. GA2OX subfamily. The cofactor is L-ascorbate. Fe(2+) serves as cofactor. Expressed in panicles. Expressed at low levels in young shoots, leaf blades and elongating internodes.

The protein localises to the cytoplasm. It is found in the nucleus. It carries out the reaction gibberellin A1 + 2-oxoglutarate + O2 = gibberellin A8 + succinate + CO2. Its function is as follows. Catalyzes the 2-beta-hydroxylation of several biologically active gibberellins, leading to the homeostatic regulation of their endogenous level. Catabolism of gibberellins (GAs) plays a central role in plant development. In vitro, converts GA12 and GA53 to the corresponding 2-beta-hydroxylated products GA110 and GA97, respectively. The polypeptide is Gibberellin 2-beta-dioxygenase 6 (Oryza sativa subsp. japonica (Rice)).